We begin with the raw amino-acid sequence, 222 residues long: Cytidylate kinase (222 aa).

11–19 (GPSGSGKST) is a binding site for ATP.

It belongs to the cytidylate kinase family. Type 1 subfamily.

The protein resides in the cytoplasm. It carries out the reaction CMP + ATP = CDP + ADP. The enzyme catalyses dCMP + ATP = dCDP + ADP. The protein is Cytidylate kinase of Ureaplasma urealyticum serovar 10 (strain ATCC 33699 / Western).